A 185-amino-acid chain; its full sequence is Ribosome-recycling factor (185 aa).

Belongs to the RRF family.

It is found in the cytoplasm. Functionally, responsible for the release of ribosomes from messenger RNA at the termination of protein biosynthesis. May increase the efficiency of translation by recycling ribosomes from one round of translation to another. This chain is Ribosome-recycling factor, found in Corynebacterium aurimucosum (strain ATCC 700975 / DSM 44827 / CIP 107346 / CN-1) (Corynebacterium nigricans).